The sequence spans 98 residues: NADH-ubiquinone oxidoreductase chain 4L (98 aa).

The next 3 membrane-spanning stretches (helical) occupy residues 1 to 21, 30 to 50, and 61 to 81; these read MSPI…GLLI, LLCL…LALT, and IILL…LVMV.

It belongs to the complex I subunit 4L family. As to quaternary structure, core subunit of respiratory chain NADH dehydrogenase (Complex I) which is composed of 45 different subunits.

The protein localises to the mitochondrion inner membrane. It catalyses the reaction a ubiquinone + NADH + 5 H(+)(in) = a ubiquinol + NAD(+) + 4 H(+)(out). Core subunit of the mitochondrial membrane respiratory chain NADH dehydrogenase (Complex I) which catalyzes electron transfer from NADH through the respiratory chain, using ubiquinone as an electron acceptor. Part of the enzyme membrane arm which is embedded in the lipid bilayer and involved in proton translocation. The sequence is that of NADH-ubiquinone oxidoreductase chain 4L (MT-ND4L) from Chrysochloris asiatica (Cape golden mole).